The chain runs to 2273 residues: Acetyl-CoA carboxylase, mitochondrial (2273 aa).

A mitochondrion-targeting transit peptide spans 1-104 (KGKTITHGQS…RGNIHKHTRL (104 aa)). One can recognise a Biotin carboxylation domain in the interval 134–635 (VISKILIANN…STGWLDDLIL (502 aa)). The ATP-grasp domain occupies 292-484 (KTNFVSVPDD…LPATQLQIAM (193 aa)). 332–337 (GGGGKG) contacts ATP. Residue R459 is part of the active site. The Biotinyl-binding domain occupies 763 to 837 (LEAELNPTQV…EAGDVIAKLT (75 aa)). An N6-biotinyllysine modification is found at K804. The region spanning 1532 to 1867 (PYSVKDWLQP…KRDMSPPLLE (336 aa)) is the CoA carboxyltransferase N-terminal domain. The tract at residues 1532-2187 (PYSVKDWLQP…EGQVIKRLQK (656 aa)) is carboxyltransferase. CoA is bound by residues R1776, K2080, and R2082. The CoA carboxyltransferase C-terminal domain maps to 1871-2187 (RWDRDVDFKP…EGQVIKRLQK (317 aa)).

Biotin serves as cofactor.

It is found in the mitochondrion. It catalyses the reaction hydrogencarbonate + acetyl-CoA + ATP = malonyl-CoA + ADP + phosphate + H(+). The catalysed reaction is N(6)-biotinyl-L-lysyl-[protein] + hydrogencarbonate + ATP = N(6)-carboxybiotinyl-L-lysyl-[protein] + ADP + phosphate + H(+). Its pathway is lipid metabolism; malonyl-CoA biosynthesis; malonyl-CoA from acetyl-CoA: step 1/1. Its function is as follows. Catalyzes the rate-limiting reaction in the mitochondrial fatty acid synthesis (FAS) type II pathway. Responsible for the production of the mitochondrial malonyl-CoA, used for the biosynthesis of the cofactor lipoic acid. This protein carries three functions: biotin carboxyl carrier protein, biotin carboxylase, and carboxyltransferase. The sequence is that of Acetyl-CoA carboxylase, mitochondrial (HFA1) from Saccharomyces cerevisiae (strain JAY291) (Baker's yeast).